The chain runs to 1196 residues: DNA-directed RNA polymerase subunit beta (1196 aa).

It belongs to the RNA polymerase beta chain family. As to quaternary structure, the RNAP catalytic core consists of 2 alpha, 1 beta, 1 beta' and 1 omega subunit. When a sigma factor is associated with the core the holoenzyme is formed, which can initiate transcription.

It catalyses the reaction RNA(n) + a ribonucleoside 5'-triphosphate = RNA(n+1) + diphosphate. In terms of biological role, DNA-dependent RNA polymerase catalyzes the transcription of DNA into RNA using the four ribonucleoside triphosphates as substrates. The polypeptide is DNA-directed RNA polymerase subunit beta (Lactococcus lactis subsp. cremoris (strain SK11)).